The following is a 672-amino-acid chain: Acetoacetyl-CoA synthetase (672 aa).

It belongs to the ATP-dependent AMP-binding enzyme family.

It localises to the cytoplasm. It is found in the cytosol. It carries out the reaction acetoacetate + ATP + CoA = acetoacetyl-CoA + AMP + diphosphate. Functionally, converts acetoacetate to acetoacetyl-CoA in the cytosol. Ketone body-utilizing enzyme, responsible for the synthesis of cholesterol and fatty acids. The sequence is that of Acetoacetyl-CoA synthetase (Aacs) from Mus musculus (Mouse).